We begin with the raw amino-acid sequence, 335 residues long: Holliday junction branch migration complex subunit RuvB (335 aa).

The segment at 2–184 (ADERIVSAEN…FGIVEHMAYY (183 aa)) is large ATPase domain (RuvB-L). ATP is bound by residues leucine 23, arginine 24, glycine 65, lysine 68, threonine 69, threonine 70, 131–133 (EDF), arginine 174, tyrosine 184, and arginine 221. Threonine 69 is a Mg(2+) binding site. The small ATPAse domain (RuvB-S) stretch occupies residues 185–255 (TEADLMDIVQ…IADHALSQLQ (71 aa)). A head domain (RuvB-H) region spans residues 258 to 335 (IRGLDGVDRK…AHLGMPYPEK (78 aa)). DNA is bound by residues arginine 313 and arginine 318.

Belongs to the RuvB family. Homohexamer. Forms an RuvA(8)-RuvB(12)-Holliday junction (HJ) complex. HJ DNA is sandwiched between 2 RuvA tetramers; dsDNA enters through RuvA and exits via RuvB. An RuvB hexamer assembles on each DNA strand where it exits the tetramer. Each RuvB hexamer is contacted by two RuvA subunits (via domain III) on 2 adjacent RuvB subunits; this complex drives branch migration. In the full resolvosome a probable DNA-RuvA(4)-RuvB(12)-RuvC(2) complex forms which resolves the HJ.

The protein resides in the cytoplasm. The enzyme catalyses ATP + H2O = ADP + phosphate + H(+). Its function is as follows. The RuvA-RuvB-RuvC complex processes Holliday junction (HJ) DNA during genetic recombination and DNA repair, while the RuvA-RuvB complex plays an important role in the rescue of blocked DNA replication forks via replication fork reversal (RFR). RuvA specifically binds to HJ cruciform DNA, conferring on it an open structure. The RuvB hexamer acts as an ATP-dependent pump, pulling dsDNA into and through the RuvAB complex. RuvB forms 2 homohexamers on either side of HJ DNA bound by 1 or 2 RuvA tetramers; 4 subunits per hexamer contact DNA at a time. Coordinated motions by a converter formed by DNA-disengaged RuvB subunits stimulates ATP hydrolysis and nucleotide exchange. Immobilization of the converter enables RuvB to convert the ATP-contained energy into a lever motion, pulling 2 nucleotides of DNA out of the RuvA tetramer per ATP hydrolyzed, thus driving DNA branch migration. The RuvB motors rotate together with the DNA substrate, which together with the progressing nucleotide cycle form the mechanistic basis for DNA recombination by continuous HJ branch migration. Branch migration allows RuvC to scan DNA until it finds its consensus sequence, where it cleaves and resolves cruciform DNA. The chain is Holliday junction branch migration complex subunit RuvB from Latilactobacillus sakei subsp. sakei (strain 23K) (Lactobacillus sakei subsp. sakei).